Reading from the N-terminus, the 301-residue chain is MANHVITATATMLEEMRNHYASDITGHLPAGALFVAKRSGCTITAYRTGKVLFQGKEAEQEAAKWMKESDQKEAPVPQPPLAAASAIGSDEVGTGDYFGPVVVAAAYVAKDQMDAITAMGIKDSKLLTDEAIRRLAPSLMNMIPNQTVILSNPMYNDWQRSGMPQTKIKALLHNEAIGKLVKQLSPIEPEAIIIDQFIERDLYFRYLENETNVVRDHVYCYPKAETVHVAVAAASIIARYVFLQEMERLSKEVGMTLPKGAGAQVDQAAAKLIQTHGPAILEMCAKLHFANTEKAARIAKK.

An RNase H type-2 domain is found at 84–301 (ASAIGSDEVG…TEKAARIAKK (218 aa)). Residues D90, E91, and D195 each coordinate a divalent metal cation.

This sequence belongs to the RNase HII family. RnhC subfamily. Mn(2+) serves as cofactor. Mg(2+) is required as a cofactor.

It is found in the cytoplasm. It carries out the reaction Endonucleolytic cleavage to 5'-phosphomonoester.. Its function is as follows. Endonuclease that specifically degrades the RNA of RNA-DNA hybrids. The chain is Ribonuclease HIII from Geobacillus sp. (strain WCH70).